The chain runs to 325 residues: Urease accessory protein UreD (325 aa).

The protein belongs to the UreD family. As to quaternary structure, ureD, UreF and UreG form a complex that acts as a GTP-hydrolysis-dependent molecular chaperone, activating the urease apoprotein by helping to assemble the nickel containing metallocenter of UreC. The UreE protein probably delivers the nickel.

It is found in the cytoplasm. Required for maturation of urease via the functional incorporation of the urease nickel metallocenter. In terms of biological role, expression of the urease operon increases the likelihood of bacterial survival by contributing to acid resistance in vitro and in vivo in BALB/c mice. Y.enterocolitica enters the body via an oral path and must survive the acidic stomach before being able to colonize the intestinal mucosa. This Yersinia enterocolitica protein is Urease accessory protein UreD.